Reading from the N-terminus, the 358-residue chain is Dual-specificity RNA methyltransferase RlmN (358 aa).

E86 acts as the Proton acceptor in catalysis. The region spanning R105–D338 is the Radical SAM core domain. A disulfide bridge links C112 with C343. Positions 119, 123, and 126 each coordinate [4Fe-4S] cluster. S-adenosyl-L-methionine is bound by residues G169–E170, S201, S224–H226, and N300. The S-methylcysteine intermediate role is filled by C343.

It belongs to the radical SAM superfamily. RlmN family. The cofactor is [4Fe-4S] cluster.

The protein resides in the cytoplasm. It carries out the reaction adenosine(2503) in 23S rRNA + 2 reduced [2Fe-2S]-[ferredoxin] + 2 S-adenosyl-L-methionine = 2-methyladenosine(2503) in 23S rRNA + 5'-deoxyadenosine + L-methionine + 2 oxidized [2Fe-2S]-[ferredoxin] + S-adenosyl-L-homocysteine. The catalysed reaction is adenosine(37) in tRNA + 2 reduced [2Fe-2S]-[ferredoxin] + 2 S-adenosyl-L-methionine = 2-methyladenosine(37) in tRNA + 5'-deoxyadenosine + L-methionine + 2 oxidized [2Fe-2S]-[ferredoxin] + S-adenosyl-L-homocysteine. Specifically methylates position 2 of adenine 2503 in 23S rRNA and position 2 of adenine 37 in tRNAs. m2A2503 modification seems to play a crucial role in the proofreading step occurring at the peptidyl transferase center and thus would serve to optimize ribosomal fidelity. The protein is Dual-specificity RNA methyltransferase RlmN of Campylobacter hominis (strain ATCC BAA-381 / DSM 21671 / CCUG 45161 / LMG 19568 / NCTC 13146 / CH001A).